A 321-amino-acid polypeptide reads, in one-letter code: Major immediate early protein (321 aa).

The segment at 86–139 adopts an RING-type zinc-finger fold; the sequence is CSVCLETYSQQSNDTCPFLIPTTCDHGFCFKCVINLQSNAMNIPHSTVCCPLCN. The tract at residues 228-249 is leucine-zipper; sequence LIEENTRLNEQIQELQHQVRTL.

The protein localises to the host nucleus. In terms of biological role, plays some regulatory role in both viral DNA replication and transcriptional transactivation. The chain is Major immediate early protein (PE38) from Lepidoptera (butterflies and moths).